The primary structure comprises 342 residues: Periplasmic protein TorT (342 aa).

The N-terminal stretch at 1–18 is a signal peptide; that stretch reads MRVLLFLLLSLFMLPAFS.

It belongs to the bacterial solute-binding protein 2 family.

Its subcellular location is the periplasm. Its function is as follows. Upon binding a putative inducer it probably interacts with TorS and allows it to play a role in the induction of the torCAD operon for trimethylamine N-oxide reductase. This is Periplasmic protein TorT (torT) from Escherichia coli (strain K12).